A 524-amino-acid chain; its full sequence is Glutamyl-tRNA(Gln) amidotransferase subunit A, mitochondrial (524 aa).

Catalysis depends on Lys-76, which acts as the Charge relay system. Residues 146 to 168 form a disordered region; it reads KQYRGKGSPDSSQEDQEPQWLVA. The active-site Charge relay system is Ser-171. Ser-195 serves as the catalytic Acyl-ester intermediate.

The protein belongs to the amidase family. GatA subfamily. Subunit of the heterotrimeric GatCAB amidotransferase (AdT) complex, composed of A (QRSL1), B (GATB) and C (GATC) subunits.

The protein resides in the mitochondrion. It catalyses the reaction L-glutamyl-tRNA(Gln) + L-glutamine + ATP + H2O = L-glutaminyl-tRNA(Gln) + L-glutamate + ADP + phosphate + H(+). In terms of biological role, allows the formation of correctly charged Gln-tRNA(Gln) through the transamidation of misacylated Glu-tRNA(Gln) in the mitochondria. The reaction takes place in the presence of glutamine and ATP through an activated gamma-phospho-Glu-tRNA(Gln). The polypeptide is Glutamyl-tRNA(Gln) amidotransferase subunit A, mitochondrial (Ornithorhynchus anatinus (Duckbill platypus)).